The sequence spans 113 residues: Heavy metal-associated isoprenylated plant protein 15 (113 aa).

One can recognise an HMA domain in the interval 1–65 (MIVWMGVYDQ…KWGKAKLTLY (65 aa)). A coiled-coil region spans residues 69 to 89 (DALKEAKIAEAKQKREEIERE). Cysteine methyl ester is present on C110. C110 carries S-farnesyl cysteine lipidation. A propeptide spans 111-113 (VIC) (removed in mature form).

It belongs to the HIPP family. As to expression, expressed in embryo sacs.

Probable heavy-metal-binding protein. This is Heavy metal-associated isoprenylated plant protein 15 from Arabidopsis thaliana (Mouse-ear cress).